A 79-amino-acid polypeptide reads, in one-letter code: D-alanyl carrier protein (79 aa).

In terms of domain architecture, Carrier spans 1-77 (MTVEEKIIDA…KIVEGVKELQ (77 aa)). Ser35 carries the post-translational modification O-(pantetheine 4'-phosphoryl)serine.

It belongs to the DltC family. In terms of processing, 4'-phosphopantetheine is transferred from CoA to a specific serine of apo-DCP.

Its subcellular location is the cytoplasm. It functions in the pathway cell wall biogenesis; lipoteichoic acid biosynthesis. In terms of biological role, carrier protein involved in the D-alanylation of lipoteichoic acid (LTA). The loading of thioester-linked D-alanine onto DltC is catalyzed by D-alanine--D-alanyl carrier protein ligase DltA. The DltC-carried D-alanyl group is further transferred to cell membrane phosphatidylglycerol (PG) by forming an ester bond, probably catalyzed by DltD. D-alanylation of LTA plays an important role in modulating the properties of the cell wall in Gram-positive bacteria, influencing the net charge of the cell wall. This is D-alanyl carrier protein from Streptococcus uberis (strain ATCC BAA-854 / 0140J).